The chain runs to 177 residues: NAD(P)H-quinone oxidoreductase subunit 6, chloroplastic (177 aa).

5 helical membrane passes run 10-30 (FLLV…VLLT), 32-52 (PIFS…FYTP), 61-81 (AQLL…VMFM), 92-112 (LWTV…VSLI), and 152-172 (FFLP…GAIS).

The protein belongs to the complex I subunit 6 family. As to quaternary structure, NDH is composed of at least 16 different subunits, 5 of which are encoded in the nucleus.

It is found in the plastid. The protein localises to the chloroplast thylakoid membrane. It catalyses the reaction a plastoquinone + NADH + (n+1) H(+)(in) = a plastoquinol + NAD(+) + n H(+)(out). The catalysed reaction is a plastoquinone + NADPH + (n+1) H(+)(in) = a plastoquinol + NADP(+) + n H(+)(out). In terms of biological role, NDH shuttles electrons from NAD(P)H:plastoquinone, via FMN and iron-sulfur (Fe-S) centers, to quinones in the photosynthetic chain and possibly in a chloroplast respiratory chain. The immediate electron acceptor for the enzyme in this species is believed to be plastoquinone. Couples the redox reaction to proton translocation, and thus conserves the redox energy in a proton gradient. The polypeptide is NAD(P)H-quinone oxidoreductase subunit 6, chloroplastic (ndhG) (Ranunculus macranthus (Large buttercup)).